Here is a 66-residue protein sequence, read N- to C-terminus: Large ribosomal subunit protein uL29 (66 aa).

Belongs to the universal ribosomal protein uL29 family.

The chain is Large ribosomal subunit protein uL29 from Francisella tularensis subsp. holarctica (strain LVS).